A 278-amino-acid polypeptide reads, in one-letter code: Transmembrane protein 41B (278 aa).

The interval 1-31 (MQVHERSHTGGHTCQCNHGSEKKAPATGKVH) is disordered. 6 helical membrane passes run 39 to 59 (MSLL…FLVY), 96 to 116 (FYVE…TFAI), 132 to 154 (FPLA…YLLS), 184 to 204 (LINY…FINI), 212 to 232 (PLKV…FVAI), and 249 to 269 (SWNS…PAIF). Positions 127 to 238 (GFLYPFPLAL…FVAIKAGTTL (112 aa)) are VTT domain; required for its function in autophagy.

The protein belongs to the TMEM41 family.

Its subcellular location is the endoplasmic reticulum membrane. The protein resides in the endomembrane system. The catalysed reaction is a 1,2-diacyl-sn-glycero-3-phospho-L-serine(in) = a 1,2-diacyl-sn-glycero-3-phospho-L-serine(out). It catalyses the reaction cholesterol(in) = cholesterol(out). It carries out the reaction a 1,2-diacyl-sn-glycero-3-phosphocholine(in) = a 1,2-diacyl-sn-glycero-3-phosphocholine(out). The enzyme catalyses a 1,2-diacyl-sn-glycero-3-phosphoethanolamine(in) = a 1,2-diacyl-sn-glycero-3-phosphoethanolamine(out). Phospholipid scramblase involved in lipid homeostasis and membrane dynamics processes. Has phospholipid scramblase activity toward cholesterol and phosphatidylserine, as well as phosphatidylethanolamine and phosphatidylcholine. Required for autophagosome formation: participates in early stages of autophagosome biogenesis at the endoplasmic reticulum (ER) membrane by reequilibrating the leaflets of the ER as lipids are extracted by atg2 (atg2a or atg2b) to mediate autophagosome assembly. In addition to autophagy, involved in other processes in which phospholipid scramblase activity is required. Required for normal motor neuron development. In Xenopus tropicalis (Western clawed frog), this protein is Transmembrane protein 41B.